We begin with the raw amino-acid sequence, 407 residues long: 5-aminolevulinate synthase 2 (407 aa).

Residues Arg-21 and Ser-137 each contribute to the substrate site. Ser-189, His-217, and Thr-245 together coordinate pyridoxal 5'-phosphate. Lys-248 is an active-site residue. Lys-248 is subject to N6-(pyridoxal phosphate)lysine. Pyridoxal 5'-phosphate contacts are provided by Thr-277 and Thr-278. Thr-363 lines the substrate pocket.

It belongs to the class-II pyridoxal-phosphate-dependent aminotransferase family. Homodimer. The cofactor is pyridoxal 5'-phosphate.

The catalysed reaction is succinyl-CoA + glycine + H(+) = 5-aminolevulinate + CO2 + CoA. It participates in porphyrin-containing compound metabolism; protoporphyrin-IX biosynthesis; 5-aminolevulinate from glycine: step 1/1. In Cereibacter sphaeroides (strain ATCC 17023 / DSM 158 / JCM 6121 / CCUG 31486 / LMG 2827 / NBRC 12203 / NCIMB 8253 / ATH 2.4.1.) (Rhodobacter sphaeroides), this protein is 5-aminolevulinate synthase 2 (hemT).